The following is an 830-amino-acid chain: AdoMet-dependent rRNA methyltransferase SPB1 (830 aa).

Residues G58, W60, D78, D94, and D119 each contribute to the S-adenosyl-L-methionine site. K159 (proton acceptor) is an active-site residue. The stretch at 345-388 (LTEEEQIEKELQEMQQKQNLKKKREKRKQNEIKQKEITRMQMQM) forms a coiled coil. 2 disordered regions span residues 485–529 (AKEA…SDSD) and 565–642 (EADL…AREV). Acidic residues-rich tracts occupy residues 516–529 (VDDD…SDSD), 591–610 (VSEE…DSDF), and 618–630 (DESD…EDEA). Basic and acidic residues predominate over residues 631–642 (ERSQKEKHAREV).

It belongs to the class I-like SAM-binding methyltransferase superfamily. RNA methyltransferase RlmE family. SPB1 subfamily. In terms of assembly, component of the nucleolar and nucleoplasmic pre-60S ribosomal particle.

The protein localises to the nucleus. It is found in the nucleolus. It catalyses the reaction a ribonucleotide in rRNA + S-adenosyl-L-methionine = a 2'-O-methylribonucleotide in rRNA + S-adenosyl-L-homocysteine + H(+). Its function is as follows. Required for proper assembly of pre-ribosomal particles during the biogenesis of the 60S ribosomal subunit. This is AdoMet-dependent rRNA methyltransferase SPB1 from Eremothecium gossypii (strain ATCC 10895 / CBS 109.51 / FGSC 9923 / NRRL Y-1056) (Yeast).